The chain runs to 206 residues: Sclerostin domain-containing protein 1 (206 aa).

Residues 1–23 form the signal peptide; sequence MLPPAIHFYLLPLACILMKSCLA. A glycan (N-linked (GlcNAc...) asparagine) is linked at asparagine 47. 4 cysteine pairs are disulfide-bonded: cysteine 75–cysteine 133, cysteine 89–cysteine 147, cysteine 100–cysteine 163, and cysteine 104–cysteine 165. In terms of domain architecture, CTCK spans 75–170; sequence CRELRSTKYI…TACKCKRYTR (96 aa). N-linked (GlcNAc...) asparagine glycosylation is present at asparagine 173. Residues 174–206 form a disordered region; that stretch reads ESSHNFESMSPAKPVQHHRERKRASKSSKHSMS. Over residues 188–206 the composition is skewed to basic residues; it reads VQHHRERKRASKSSKHSMS.

This sequence belongs to the sclerostin family. In terms of assembly, interacts with BMP2, BMP4, BMP6 and BMP7 with high affinity. In terms of tissue distribution, highly expressed in kidney and weakly in lung.

It localises to the secreted. May be involved in the onset of endometrial receptivity for implantation/sensitization for the decidual cell reaction Enhances Wnt signaling and inhibits TGF-beta signaling. Directly antagonizes activity of BMP2, BMP4, BMP6 and BMP7 in a dose-dependent manner. The sequence is that of Sclerostin domain-containing protein 1 (SOSTDC1) from Homo sapiens (Human).